Consider the following 338-residue polypeptide: ATPase GET3 (338 aa).

33-40 (KGGVGKTT) contributes to the ATP binding site. Aspartate 62 is an active-site residue. The ATP site is built by glutamate 242 and asparagine 269. Zn(2+) is bound by residues cysteine 280 and cysteine 283.

The protein belongs to the arsA ATPase family. Homodimer.

The protein localises to the cytoplasm. It is found in the endoplasmic reticulum. ATPase required for the post-translational delivery of tail-anchored (TA) proteins to the endoplasmic reticulum. Recognizes and selectively binds the transmembrane domain of TA proteins in the cytosol. This complex then targets to the endoplasmic reticulum by membrane-bound receptors, where the tail-anchored protein is released for insertion. This process is regulated by ATP binding and hydrolysis. ATP binding drives the homodimer towards the closed dimer state, facilitating recognition of newly synthesized TA membrane proteins. ATP hydrolysis is required for insertion. Subsequently, the homodimer reverts towards the open dimer state, lowering its affinity for the membrane-bound receptor, and returning it to the cytosol to initiate a new round of targeting. The protein is ATPase GET3 of Uncinocarpus reesii (strain UAMH 1704).